A 469-amino-acid polypeptide reads, in one-letter code: Neuraminidase (469 aa).

Residues 1–9 (MNPNQKIIT) lie on the Intravirion side of the membrane. A helical membrane pass occupies residues 10-30 (IGSVSLTIATICFLMQIAILV). The involved in apical transport and lipid raft association stretch occupies residues 11–33 (GSVSLTIATICFLMQIAILVTTV). The Virion surface portion of the chain corresponds to 31-469 (TTVTLHFKQY…DGADINLMPI (439 aa)). The hypervariable stalk region stretch occupies residues 36–88 (HFKQYECSSPPNNQVMPCEPIIIERNITEIVYLTNTTIDKEICPKLVEYRNWS). N61, N70, and N86 each carry an N-linked (GlcNAc...) asparagine; by host glycan. The interval 91 to 469 (QCKITGFAPF…DGADINLMPI (379 aa)) is head of neuraminidase. 8 disulfide bridges follow: C92-C417, C124-C129, C183-C230, C232-C237, C278-C291, C280-C289, C318-C337, and C421-C447. Position 118 (R118) interacts with substrate. An N-linked (GlcNAc...) asparagine; by host glycan is attached at N146. D151 acts as the Proton donor/acceptor in catalysis. A substrate-binding site is contributed by R152. 2 N-linked (GlcNAc...) asparagine; by host glycosylation sites follow: N200 and N234. 276 to 277 (EE) is a binding site for substrate. Residue R292 coordinates substrate. Ca(2+) contacts are provided by D293, G297, and D324. Substrate is bound at residue R371. N402 carries N-linked (GlcNAc...) asparagine; by host glycosylation. Catalysis depends on Y406, which acts as the Nucleophile.

This sequence belongs to the glycosyl hydrolase 34 family. As to quaternary structure, homotetramer. Requires Ca(2+) as cofactor. In terms of processing, N-glycosylated.

Its subcellular location is the virion membrane. It is found in the host apical cell membrane. The enzyme catalyses Hydrolysis of alpha-(2-&gt;3)-, alpha-(2-&gt;6)-, alpha-(2-&gt;8)- glycosidic linkages of terminal sialic acid residues in oligosaccharides, glycoproteins, glycolipids, colominic acid and synthetic substrates.. With respect to regulation, inhibited by the neuraminidase inhibitors zanamivir (Relenza) and oseltamivir (Tamiflu). These drugs interfere with the release of progeny virus from infected cells and are effective against all influenza strains. Resistance to neuraminidase inhibitors is quite rare. Its function is as follows. Catalyzes the removal of terminal sialic acid residues from viral and cellular glycoconjugates. Cleaves off the terminal sialic acids on the glycosylated HA during virus budding to facilitate virus release. Additionally helps virus spread through the circulation by further removing sialic acids from the cell surface. These cleavages prevent self-aggregation and ensure the efficient spread of the progeny virus from cell to cell. Otherwise, infection would be limited to one round of replication. Described as a receptor-destroying enzyme because it cleaves a terminal sialic acid from the cellular receptors. May facilitate viral invasion of the upper airways by cleaving the sialic acid moieties on the mucin of the airway epithelial cells. Likely to plays a role in the budding process through its association with lipid rafts during intracellular transport. May additionally display a raft-association independent effect on budding. Plays a role in the determination of host range restriction on replication and virulence. Sialidase activity in late endosome/lysosome traffic seems to enhance virus replication. The protein is Neuraminidase of Aves (whales).